A 23-amino-acid polypeptide reads, in one-letter code: Unknown protein 1 (23 aa).

The polypeptide is Unknown protein 1 (Coniferiporia sulphurascens (Laminated root rot fungus)).